We begin with the raw amino-acid sequence, 237 residues long: Cobalt-precorrin-2 C(20)-methyltransferase (237 aa).

Belongs to the precorrin methyltransferase family. As to quaternary structure, homodimer.

It carries out the reaction Co-precorrin-2 + S-adenosyl-L-methionine = Co-precorrin-3 + S-adenosyl-L-homocysteine + H(+). It functions in the pathway cofactor biosynthesis; adenosylcobalamin biosynthesis; cob(II)yrinate a,c-diamide from sirohydrochlorin (anaerobic route): step 2/10. In terms of biological role, methylates cobalt-precorrin-2 at the C-20 position to produce cobalt-precorrin-3A in the anaerobic cobalamin biosynthesis pathway. This is Cobalt-precorrin-2 C(20)-methyltransferase (cbiL) from Salmonella typhimurium (strain LT2 / SGSC1412 / ATCC 700720).